The following is a 296-amino-acid chain: Glycine--tRNA ligase alpha subunit (296 aa).

This sequence belongs to the class-II aminoacyl-tRNA synthetase family. Tetramer of two alpha and two beta subunits.

Its subcellular location is the cytoplasm. It catalyses the reaction tRNA(Gly) + glycine + ATP = glycyl-tRNA(Gly) + AMP + diphosphate. The chain is Glycine--tRNA ligase alpha subunit from Francisella tularensis subsp. novicida (strain U112).